Reading from the N-terminus, the 145-residue chain is Large ribosomal subunit protein bL17 (145 aa).

Belongs to the bacterial ribosomal protein bL17 family. In terms of assembly, part of the 50S ribosomal subunit. Contacts protein L32.

The sequence is that of Large ribosomal subunit protein bL17 from Francisella tularensis subsp. tularensis (strain FSC 198).